We begin with the raw amino-acid sequence, 171 residues long: Disulfide bond formation protein B (171 aa).

Over 1–10 (MQRLLTYRAL) the chain is Cytoplasmic. The helical transmembrane segment at 11 to 27 (NFILFIASVVAMLFAII) threads the bilayer. Residues 28 to 46 (FLQNYKGLEPCPLCIFQRI) are Periplasmic-facing. The cysteines at positions 38 and 41 are disulfide-linked. The helical transmembrane segment at 47-63 (GLMVMGGFSLIAAVGHP) threads the bilayer. Topologically, residues 64-70 (KKMGMQL) are cytoplasmic. Residues 71-88 (LLWIGSMAGILWSAGVAA) traverse the membrane as a helical segment. The Periplasmic portion of the chain corresponds to 89-145 (RHVWIQHLPADQVPACGPGLDYFLEALPMKQVINQVLSGSGECAEISWRFLGLSIPE). An intrachain disulfide couples Cys-104 to Cys-131. The helical transmembrane segment at 146–164 (QALILFTALILVNLLVLWR) threads the bilayer. Over 165–171 (IISKRTA) the chain is Cytoplasmic.

It belongs to the DsbB family.

It localises to the cell inner membrane. Its function is as follows. Required for disulfide bond formation in some periplasmic proteins. Acts by oxidizing the DsbA protein. This Psychrobacter sp. (strain PRwf-1) protein is Disulfide bond formation protein B.